Reading from the N-terminus, the 113-residue chain is Small ribosomal subunit protein bS6 (113 aa).

This sequence belongs to the bacterial ribosomal protein bS6 family.

In terms of biological role, binds together with bS18 to 16S ribosomal RNA. This is Small ribosomal subunit protein bS6 (rpsF) from Buchnera aphidicola subsp. Acyrthosiphon pisum (strain APS) (Acyrthosiphon pisum symbiotic bacterium).